The sequence spans 318 residues: Leucine-rich repeat domain-containing protein YddK (318 aa).

LRR repeat units follow at residues 109–129, 130–151, 153–173, 174–194, 195–216, 217–237, 238–258, 260–280, and 284–305; these read NFTS…TNYD, RLVK…QGRN, SITH…DRLS, SVTY…ESCE, WLQY…NKNE, LLLL…LFPN, LNTL…YSNF, NVQT…DFLT, and SIKS…NTSD.

In Escherichia coli (strain K12), this protein is Leucine-rich repeat domain-containing protein YddK (yddK).